The sequence spans 238 residues: 2-C-methyl-D-erythritol 4-phosphate cytidylyltransferase (238 aa).

This sequence belongs to the IspD/TarI cytidylyltransferase family. IspD subfamily.

The enzyme catalyses 2-C-methyl-D-erythritol 4-phosphate + CTP + H(+) = 4-CDP-2-C-methyl-D-erythritol + diphosphate. The protein operates within isoprenoid biosynthesis; isopentenyl diphosphate biosynthesis via DXP pathway; isopentenyl diphosphate from 1-deoxy-D-xylulose 5-phosphate: step 2/6. Functionally, catalyzes the formation of 4-diphosphocytidyl-2-C-methyl-D-erythritol from CTP and 2-C-methyl-D-erythritol 4-phosphate (MEP). The protein is 2-C-methyl-D-erythritol 4-phosphate cytidylyltransferase of Acinetobacter baumannii (strain AYE).